Here is a 371-residue protein sequence, read N- to C-terminus: tRNA-specific 2-thiouridylase MnmA (371 aa).

Residues 22–29 and Met-48 contribute to the ATP site; that span reads GLSGGVDS. Positions 108 to 110 are interaction with target base in tRNA; it reads NPD. The active-site Nucleophile is the Cys-113. A disulfide bridge links Cys-113 with Cys-209. Gly-137 provides a ligand contact to ATP. The tract at residues 159–161 is interaction with tRNA; sequence KDQ. The active-site Cysteine persulfide intermediate is the Cys-209.

The protein belongs to the MnmA/TRMU family.

It localises to the cytoplasm. It catalyses the reaction S-sulfanyl-L-cysteinyl-[protein] + uridine(34) in tRNA + AH2 + ATP = 2-thiouridine(34) in tRNA + L-cysteinyl-[protein] + A + AMP + diphosphate + H(+). Functionally, catalyzes the 2-thiolation of uridine at the wobble position (U34) of tRNA, leading to the formation of s(2)U34. This chain is tRNA-specific 2-thiouridylase MnmA, found in Coxiella burnetii (strain CbuG_Q212) (Coxiella burnetii (strain Q212)).